Here is a 685-residue protein sequence, read N- to C-terminus: Frizzled-8 (685 aa).

The first 27 residues, 1–27 (MEWGYLLEVTSLLAALAVLQRSSGAAA), serve as a signal peptide directing secretion. Residues 28–272 (ASAKELACQE…NPFFSQDERA (245 aa)) lie on the Extracellular side of the membrane. Residues 30–151 (AKELACQEIT…GNPDTLCMDY (122 aa)) enclose the FZ domain. Cystine bridges form between C35-C96, C43-C89, C80-C118, C107-C148, and C111-C135. N49 carries N-linked (GlcNAc...) asparagine glycosylation. 71–78 (QFWPLVEI) provides a ligand contact to hexadecanoate. The wnt-binding stretch occupies residues 95-100 (ICLEDY). Positions 147-152 (LCMDYN) are wnt-binding. A glycan (N-linked (GlcNAc...) asparagine) is linked at N152. Residues 155-223 (DLTTAAPSPP…KARPPGGGAA (69 aa)) are disordered. Positions 161–176 (PSPPRRLPPPPPPGEQ) are enriched in pro residues. 2 stretches are compositionally biased toward low complexity: residues 177-187 (PPSGSGHSRPP) and 200-223 (GSGD…GGAA). A helical transmembrane segment spans residues 273–293 (FTVFWIGLWSVLCFVSTFATV). The Cytoplasmic segment spans residues 294-309 (STFLIDMERFKYPERP). A helical membrane pass occupies residues 310-330 (IIFLSACYLFVSVGYLVRLVA). Residues 331–394 (GHEKVACSGG…RYETTGPALC (64 aa)) are Extracellular-facing. The helical transmembrane segment at 395–415 (TVVFLLVYFFGMASSIWWVIL) threads the bilayer. Topologically, residues 416-437 (SLTWFLAAGMKWGNEAIAGYSQ) are cytoplasmic. A helical membrane pass occupies residues 438–458 (YFHLAAWLVPSVKSIAVLALS). Over 459–481 (SVDGDPVAGICYVGNQSLDNLRG) the chain is Extracellular. N-linked (GlcNAc...) asparagine glycosylation occurs at N473. The helical transmembrane segment at 482–502 (FVLAPLVIYLFIGTMFLLAGF) threads the bilayer. The Cytoplasmic segment spans residues 503-530 (VSLFRIRSVIKQQGGPTKTHKLEKLMIR). The chain crosses the membrane as a helical span at residues 531-551 (LGLFTVLYTVPAAVVVACLFY). At 552 to 582 (EQHNRPRWEATHNCPCLRDLQPDQARRPDYA) the chain is on the extracellular side. The chain crosses the membrane as a helical span at residues 583–603 (VFMLKYFMCLVVGITSGVWVW). The Cytoplasmic segment spans residues 604–685 (SGKTLESWRA…YPKQMPLSQV (82 aa)). The Lys-Thr-X-X-X-Trp motif, mediates interaction with the PDZ domain of Dvl family members motif lies at 606-611 (KTLESW). The segment covering 631 to 655 (AGGSGPGGSGPGPGGGGGHGGGGGS) has biased composition (gly residues). The disordered stretch occupies residues 631–656 (AGGSGPGGSGPGPGGGGGHGGGGGSL). Positions 683 to 685 (SQV) match the PDZ-binding motif.

The protein belongs to the G-protein coupled receptor Fz/Smo family. Component of a Wnt-signaling complex that contains a WNT protein, a FZD protein and LRP5 or LRP6. Interacts directly with LRP5 or LRP6; the interaction is promoted by Wnt-binding and signaling and inhibited by DKK1. Interacts (via the PDZ-binding motif) with GPOC (via its PDZ domain). Interacts with RSPO1 and RSPO3. Interacts with glypican GPC3. Post-translationally, ubiquitinated by ZNRF3, leading to its degradation by the proteasome. In terms of tissue distribution, expressed in chondrocytes.

The protein localises to the membrane. It localises to the golgi apparatus. Its subcellular location is the cell membrane. Functionally, receptor for Wnt proteins. Component of the Wnt-Fzd-LRP5-LRP6 complex that triggers beta-catenin signaling through inducing aggregation of receptor-ligand complexes into ribosome-sized signalosomes. The beta-catenin canonical signaling pathway leads to the activation of disheveled proteins, inhibition of GSK-3 kinase, nuclear accumulation of beta-catenin and activation of Wnt target genes. A second signaling pathway involving PKC and calcium fluxes has been seen for some family members, but it is not yet clear if it represents a distinct pathway or if it can be integrated in the canonical pathway, as PKC seems to be required for Wnt-mediated inactivation of GSK-3 kinase. Both pathways seem to involve interactions with G-proteins. May be involved in transduction and intercellular transmission of polarity information during tissue morphogenesis and/or in differentiated tissues. Coreceptor along with RYK of Wnt proteins, such as WNT1. The chain is Frizzled-8 (Fzd8) from Mus musculus (Mouse).